A 465-amino-acid chain; its full sequence is GTPase Der (465 aa).

EngA-type G domains are found at residues 27–190 and 202–375; these read PVLA…PEAP and RRIA…AGWE. Residues 33-40, 80-84, 142-145, 208-215, 255-259, and 320-323 contribute to the GTP site; these read GRPNVGKS, DTGGW, NKVD, DTAGI, and NKWD. Residues 376–458 enclose the KH-like domain; it reads TRVPTGRLNA…PIHISVRVRE (83 aa).

This sequence belongs to the TRAFAC class TrmE-Era-EngA-EngB-Septin-like GTPase superfamily. EngA (Der) GTPase family. In terms of assembly, associates with the 50S ribosomal subunit.

In terms of biological role, GTPase that plays an essential role in the late steps of ribosome biogenesis. In Streptomyces coelicolor (strain ATCC BAA-471 / A3(2) / M145), this protein is GTPase Der.